The following is a 1018-amino-acid chain: Pikachurin (1018 aa).

An N-terminal signal peptide occupies residues 1 to 23; it reads MDLIRGVLLRLLLLASSLGPGAA. Fibronectin type-III domains are found at residues 37–145 and 153–248; these read PPLD…TLPQ and APQQ…TARP. The N-linked (GlcNAc...) asparagine glycan is linked to asparagine 47. The disordered stretch occupies residues 228–274; the sequence is VNPHGSSPRSQPSSTIRTARPEESGSGRYGPHYATDTEAGEDDDTFE. Polar residues predominate over residues 231–244; that stretch reads HGSSPRSQPSSTIR. A compositionally biased stretch (acidic residues) spans 265–274; sequence EAGEDDDTFE. The EGF-like 1 domain maps to 352-390; the sequence is FDTSCDETVCSADSFCVSDYTWGGSRCHCNLGKGGESCS. Intrachain disulfides connect cysteine 356/cysteine 367, cysteine 361/cysteine 378, cysteine 380/cysteine 389, cysteine 543/cysteine 573, cysteine 578/cysteine 589, cysteine 583/cysteine 599, cysteine 601/cysteine 610, cysteine 797/cysteine 808, cysteine 802/cysteine 817, cysteine 819/cysteine 828, and cysteine 988/cysteine 1015. Residues 395 to 573 enclose the Laminin G-like 1 domain; sequence IQYPQFFGHS…ALSGADVGEC (179 aa). EGF-like domains lie at 574–611 and 793–829; these read SSGI…RHCE and AAHP…LHCQ. One can recognise a Laminin G-like 2 domain in the interval 618–797; sequence IPQFKESLRS…VNVENAAHPC (180 aa). The Laminin G-like 3 domain occupies 836–1015; that stretch reads IEIPQFIGRS…AVDGKNINTC (180 aa).

In terms of assembly, interacts with DAG1 alpha-dystroglycan. Interacts with GPR158 and GPR179; transsynaptic interaction is required for synaptic organization of photoreceptor cells. In terms of processing, O-glycosylated; contains chondroitin sulfate and heparan sulfate.

It is found in the secreted. It localises to the extracellular space. The protein localises to the extracellular matrix. The protein resides in the synaptic cleft. Its subcellular location is the presynaptic active zone. In terms of biological role, involved in both the retinal photoreceptor ribbon synapse formation and physiological functions of visual perception. Plays a key role in the synaptic organization of photoreceptors by mediating transsynaptic interaction between alpha-dystroglycan and GPR179 on the postsynaptic membrane. Necessary for proper bipolar dendritic tip apposition to the photoreceptor ribbon synapse. Promotes matrix assembly and cell adhesiveness. The sequence is that of Pikachurin (EGFLAM) from Bos taurus (Bovine).